Reading from the N-terminus, the 469-residue chain is uncharacterized protein (469 aa).

The N-terminal stretch at 1–19 is a signal peptide; the sequence is MRINFVLLITLILPWFVSG. A run of 7 helical transmembrane segments spans residues 199–219, 236–256, 283–303, 305–325, 338–358, 386–406, and 413–433; these read IKST…TWLL, AFWV…MVAI, AYTS…PALV, YYVY…FAPL, ILLK…PFFA, IALA…RPLL, and GFQL…AFLF.

It localises to the membrane. This is an uncharacterized protein from Schizosaccharomyces pombe (strain 972 / ATCC 24843) (Fission yeast).